A 1286-amino-acid polypeptide reads, in one-letter code: Galactose/N-acetyl-D-galactosamine lectin heavy subunit 2 (1286 aa).

A signal peptide spans 1 to 15 (MKLLLLNILLLCCLA). The Extracellular segment spans residues 16 to 1227 (DKLNEFSADI…NNVGAIAAAT (1212 aa)). Asn200, Asn331, Asn384, Asn462, Asn652, Asn883, Asn1197, and Asn1207 each carry an N-linked (GlcNAc...) asparagine glycan. The helical transmembrane segment at 1228–1248 (TVAVVVVAVVVALIVVSIGLF) threads the bilayer. Topologically, residues 1249-1286 (KTYQLVSSAMKNAITTTNENAEYVGADNEATNAATYNG) are cytoplasmic.

Heterodimer composed of a 170 kDa heavy subunit (hgl) and a 31/35 kDa light subunit (lgl); disulfide-linked. N-glycosylated.

The protein resides in the cell membrane. Its function is as follows. Lectin which binds galactose and N-acetyl-D-galactosamine of host glycoproteins and thus mediates adhesion to host cells. Mediates adherence to host colonic mucins, an essential step for pathogenic tissue invasion. This is Galactose/N-acetyl-D-galactosamine lectin heavy subunit 2 from Entamoeba histolytica (strain ATCC 30459 / HM-1:IMSS / ABRM).